The chain runs to 389 residues: S-adenosylmethionine synthase (389 aa).

H15 is a binding site for ATP. D17 lines the Mg(2+) pocket. E43 contributes to the K(+) binding site. E56 and Q99 together coordinate L-methionine. The segment at Q99–E109 is flexible loop. ATP is bound by residues D166–K168, R234–F235, D243, R249–K250, A266, and K270. Residue D243 coordinates L-methionine. Residue K274 participates in L-methionine binding.

Belongs to the AdoMet synthase family. As to quaternary structure, homotetramer; dimer of dimers. It depends on Mg(2+) as a cofactor. The cofactor is K(+).

It is found in the cytoplasm. It carries out the reaction L-methionine + ATP + H2O = S-adenosyl-L-methionine + phosphate + diphosphate. Its pathway is amino-acid biosynthesis; S-adenosyl-L-methionine biosynthesis; S-adenosyl-L-methionine from L-methionine: step 1/1. In terms of biological role, catalyzes the formation of S-adenosylmethionine (AdoMet) from methionine and ATP. The overall synthetic reaction is composed of two sequential steps, AdoMet formation and the subsequent tripolyphosphate hydrolysis which occurs prior to release of AdoMet from the enzyme. The chain is S-adenosylmethionine synthase from Chromobacterium violaceum (strain ATCC 12472 / DSM 30191 / JCM 1249 / CCUG 213 / NBRC 12614 / NCIMB 9131 / NCTC 9757 / MK).